Reading from the N-terminus, the 273-residue chain is ATP synthase F(1) complex subunit gamma, mitochondrial (273 aa).

At K14 the chain carries N6-acetyllysine. The residue at position 24 (K24) is an N6-succinyllysine. Residue K30 is modified to N6-acetyllysine. K90 is subject to N6-acetyllysine; alternate. Position 90 is an N6-succinyllysine; alternate (K90). Position 113 is an N6-acetyllysine (K113). Position 121 is a phosphoserine (S121). At K129 the chain carries N6-acetyllysine; alternate. Position 129 is an N6-succinyllysine; alternate (K129). Position 172 is an N6-acetyllysine (K172). K245 is subject to N6-succinyllysine.

It belongs to the ATPase gamma chain family. As to quaternary structure, component of the ATP synthase complex composed at least of ATP5F1A/subunit alpha, ATP5F1B/subunit beta, ATP5MC1/subunit c (homooctomer), MT-ATP6/subunit a, MT-ATP8/subunit 8, ATP5ME/subunit e, ATP5MF/subunit f, ATP5MG/subunit g, ATP5MK/subunit k, ATP5MJ/subunit j, ATP5F1C/subunit gamma, ATP5F1D/subunit delta, ATP5F1E/subunit epsilon, ATP5PF/subunit F6, ATP5PB/subunit b, ATP5PD/subunit d, ATP5PO/subunit OSCP. ATP synthase complex consists of a soluble F(1) head domain (subunits alpha(3) and beta(3)) - the catalytic core - and a membrane F(0) domain - the membrane proton channel (subunits c, a, 8, e, f, g, k and j). These two domains are linked by a central stalk (subunits gamma, delta, and epsilon) rotating inside the F1 region and a stationary peripheral stalk (subunits F6, b, d, and OSCP). Interacts with FLVCR2; this interaction occurs in the absence of heme and is disrupted upon heme binding.

Its subcellular location is the mitochondrion inner membrane. Its function is as follows. Subunit gamma, of the mitochondrial membrane ATP synthase complex (F(1)F(0) ATP synthase or Complex V) that produces ATP from ADP in the presence of a proton gradient across the membrane which is generated by electron transport complexes of the respiratory chain. ATP synthase complex consist of a soluble F(1) head domain - the catalytic core - and a membrane F(1) domain - the membrane proton channel. These two domains are linked by a central stalk rotating inside the F(1) region and a stationary peripheral stalk. During catalysis, ATP synthesis in the catalytic domain of F(1) is coupled via a rotary mechanism of the central stalk subunits to proton translocation. In vivo, can only synthesize ATP although its ATP hydrolase activity can be activated artificially in vitro. With the central stalk subunit delta, is essential for the biogenesis of F(1) catalytic part of the ATP synthase complex namely in the formation of F1 assembly intermediate. The sequence is that of ATP synthase F(1) complex subunit gamma, mitochondrial from Rattus norvegicus (Rat).